Reading from the N-terminus, the 411-residue chain is MALLLNSTITVAMKQNPLVAVSFPRTTCLGSSFSPPRLLRVSCVATNPSKTSEETDKKKFRPIKEVPNQVTHTITQEKLEIFKSMENWAQENLLSYLKPVEASWQPQDFLPETNDEDRFYEQVKELRDRTKEIPDDYFVVLVGDMITEEALPTYQTTLNTLDGVKDETGGSLTPWAVWVRAWTAEENRHGDLLNKYLYLSGRVDMRHVEKTIQYLIGSGMDSKFENNPYNGFIYTSFQERATFISHGNTAKLATTYGDTTLAKICGTIAADEKRHETAYTRIVEKLFEIDPDGTVQALASMMRKRITMPAHLMHDGRDDDLFDHYAAVAQRIGVYTATDYAGILEFLLRRWEVEKLGMGLSGEGRRAQDYLCTLPQRIRRLEERANDRVKLASKSKPSVSFSWIYGREVEL.

Residues 1-44 constitute a chloroplast transit peptide; it reads MALLLNSTITVAMKQNPLVAVSFPRTTCLGSSFSPPRLLRVSCV. Glu148, Glu186, His189, Glu239, Glu272, and His275 together coordinate Fe cation.

This sequence belongs to the fatty acid desaturase type 2 family. In terms of assembly, homodimer. The cofactor is Fe(2+). In terms of tissue distribution, preferentially expressed in roots and flowers.

The protein localises to the plastid. It is found in the chloroplast. It carries out the reaction octadecanoyl-[ACP] + 2 reduced [2Fe-2S]-[ferredoxin] + O2 + 2 H(+) = (9Z)-octadecenoyl-[ACP] + 2 oxidized [2Fe-2S]-[ferredoxin] + 2 H2O. Its pathway is lipid metabolism; fatty acid metabolism. Converts stearoyl-ACP to oleoyl-ACP by introduction of a cis double bond between carbons 9 and 10 of the acyl chain. Exhibits delta-9 palmitoyl-[acyl-carrier-protein] desaturase (PAD) activity. Involved in omega-7 monounsaturated fatty acid biosynthesis, especially in the endosperm oil. The polypeptide is Stearoyl-[acyl-carrier-protein] 9-desaturase 2, chloroplastic (S-ACP-DES2) (Arabidopsis thaliana (Mouse-ear cress)).